We begin with the raw amino-acid sequence, 140 residues long: Envelope protein A28 homolog (140 aa).

Residues 1–21 (MNAITIFFIILSTVAVCIIIF) traverse the membrane as a helical; Signal-anchor for type II membrane protein segment. The Virion surface portion of the chain corresponds to 22–140 (QLYSIYLNYD…KECIFLKSMF (119 aa)).

This sequence belongs to the poxviridae A28 protein family. Contains two intramolecular disulfide bonds. They are created by the viral disulfide bond formation pathway, a poxvirus-specific pathway that operates on the cytoplasmic side of the MV membranes.

Its subcellular location is the virion membrane. Functionally, envelope protein required for virus entry into host cell and for cell-cell fusion (syncytium formation). In Bos taurus (Bovine), this protein is Envelope protein A28 homolog.